A 240-amino-acid chain; its full sequence is Glutathione S-transferase theta-1 (240 aa).

Residues 2 to 82 (GLELYLDLLS…YLARKYKVPD (81 aa)) form the GST N-terminal domain. Glutathione-binding positions include H40, 53–54 (KV), and 66–67 (ES). The GST C-terminal domain occupies 88–226 (DLQACARVDE…AKDSQPADPT (139 aa)).

This sequence belongs to the GST superfamily. Theta family. In terms of assembly, homodimer.

Its subcellular location is the cytoplasm. The enzyme catalyses RX + glutathione = an S-substituted glutathione + a halide anion + H(+). Conjugation of reduced glutathione to a wide number of exogenous and endogenous hydrophobic electrophiles. Also binds steroids, bilirubin, carcinogens and numerous organic anions. Has dichloromethane dehalogenase activity. The sequence is that of Glutathione S-transferase theta-1 (GSTT1) from Bos taurus (Bovine).